We begin with the raw amino-acid sequence, 210 residues long: uncharacterized protein (210 aa).

This is an uncharacterized protein from Escherichia coli (Bacteriophage T4).